A 155-amino-acid polypeptide reads, in one-letter code: Endoribonuclease YbeY (155 aa).

His114, His118, and His124 together coordinate Zn(2+).

This sequence belongs to the endoribonuclease YbeY family. Zn(2+) is required as a cofactor.

Its subcellular location is the cytoplasm. Single strand-specific metallo-endoribonuclease involved in late-stage 70S ribosome quality control and in maturation of the 3' terminus of the 16S rRNA. This chain is Endoribonuclease YbeY, found in Escherichia coli O6:K15:H31 (strain 536 / UPEC).